A 68-amino-acid polypeptide reads, in one-letter code: Alpha-conotoxin-like Lp1.2 (68 aa).

A signal peptide spans 1–21; sequence MGMRMMFTVFLLVVLATTVVS. Positions 22–48 are excised as a propeptide; that stretch reads FTSDRAFDGRNAAASDKASDLISLAVR. Disulfide bonds link Cys50-Cys56 and Cys51-Cys64. The ser-Xaa-Pro motif, crucial for potent interaction with nAChR stretch occupies residues 52–54; sequence SHP. Cys64 is modified (cysteine amide). The propeptide occupies 65–68; the sequence is GGKR.

It belongs to the conotoxin A superfamily. Expressed by the venom duct.

The protein localises to the secreted. Functionally, alpha-conotoxins act on postsynaptic membranes, they bind to the nicotinic acetylcholine receptors (nAChR) and thus inhibit them. This Conus leopardus (Leopard cone) protein is Alpha-conotoxin-like Lp1.2.